We begin with the raw amino-acid sequence, 507 residues long: Chromosomal replication initiator protein DnaA (507 aa).

Positions 1 to 112 (MTDDPGSGFT…PATDEADDTT (112 aa)) are domain I, interacts with DnaA modulators. The disordered stretch occupies residues 99 to 155 (RIAPPATDEADDTTVPPSENPATTSPDTTTDNDEIDDSAAARGDNQHSWPSYFTERP). Positions 113–127 (VPPSENPATTSPDTT) are enriched in polar residues. Residues 113–166 (VPPSENPATTSPDTTTDNDEIDDSAAARGDNQHSWPSYFTERPHNTDSATAGVT) form a domain II region. The interval 167 to 383 (SLNRRYTFDT…GALIRVTAFA (217 aa)) is domain III, AAA+ region. ATP contacts are provided by Gly-211, Gly-213, Lys-214, and Thr-215. The segment at 384–507 (SLNKTPIDKA…TTRIRQRSKR (124 aa)) is domain IV, binds dsDNA.

This sequence belongs to the DnaA family. As to quaternary structure, oligomerizes as a right-handed, spiral filament on DNA at oriC.

It is found in the cytoplasm. Its function is as follows. Plays an essential role in the initiation and regulation of chromosomal replication. ATP-DnaA binds to the origin of replication (oriC) to initiate formation of the DNA replication initiation complex once per cell cycle. Binds the DnaA box (a 9 base pair repeat at the origin) and separates the double-stranded (ds)DNA. Forms a right-handed helical filament on oriC DNA; dsDNA binds to the exterior of the filament while single-stranded (ss)DNA is stabiized in the filament's interior. The ATP-DnaA-oriC complex binds and stabilizes one strand of the AT-rich DNA unwinding element (DUE), permitting loading of DNA polymerase. After initiation quickly degrades to an ADP-DnaA complex that is not apt for DNA replication. Binds acidic phospholipids. The protein is Chromosomal replication initiator protein DnaA of Mycobacterium tuberculosis (strain ATCC 25177 / H37Ra).